The chain runs to 338 residues: N-acetylmuramate/N-acetylglucosamine kinase (338 aa).

It belongs to the kinase AmgK family.

The catalysed reaction is N-acetyl-D-muramate + ATP = N-acetyl-alpha-D-muramate 1-phosphate + ADP + H(+). It catalyses the reaction N-acetyl-D-glucosamine + ATP = N-acetyl-alpha-D-glucosamine 1-phosphate + ADP + H(+). It functions in the pathway cell wall biogenesis; peptidoglycan recycling. In terms of biological role, sugar kinase that catalyzes the ATP-dependent phosphorylation of N-acetylmuramate (MurNAc) and N-acetylglucosamine (GlcNAc) at its C1 hydroxyl group, leading to MurNAc alpha-1P and GlcNAc alpha-1P, respectively. Is involved in peptidoglycan recycling as part of a cell wall recycling pathway that bypasses de novo biosynthesis of the peptidoglycan precursor UDP-MurNAc. Plays a role in intrinsic resistance to fosfomycin, which targets the de novo synthesis of UDP-MurNAc. The chain is N-acetylmuramate/N-acetylglucosamine kinase from Pseudomonas aeruginosa (strain ATCC 15692 / DSM 22644 / CIP 104116 / JCM 14847 / LMG 12228 / 1C / PRS 101 / PAO1).